The chain runs to 637 residues: Biosynthetic arginine decarboxylase (637 aa).

Lysine 101 bears the N6-(pyridoxal phosphate)lysine mark. 286–296 (FDVGGGLAVDY) lines the substrate pocket.

The protein belongs to the Orn/Lys/Arg decarboxylase class-II family. SpeA subfamily. It depends on Mg(2+) as a cofactor. Requires pyridoxal 5'-phosphate as cofactor.

The catalysed reaction is L-arginine + H(+) = agmatine + CO2. Its pathway is amine and polyamine biosynthesis; agmatine biosynthesis; agmatine from L-arginine: step 1/1. Catalyzes the biosynthesis of agmatine from arginine. This chain is Biosynthetic arginine decarboxylase, found in Shewanella loihica (strain ATCC BAA-1088 / PV-4).